The chain runs to 674 residues: Sodium/hydrogen exchanger 1 (674 aa).

The first 24 residues, 1 to 24 (MKLNKSYILIVVLLLSLFYSSVSS), serve as a signal peptide directing secretion. Residues 31 to 65 (KSNNHYNSDNSNNDNKNININNNNDGDGDDDDDNN) form a disordered region. The segment covering 37–55 (NSDNSNNDNKNININNNND) has biased composition (low complexity). Transmembrane regions (helical) follow at residues 120-140 (TIIF…YFII), 144-164 (IPFV…GIVF), 175-195 (VVSF…IFET), 213-233 (MFAV…IYIV), 275-297 (LYIL…YSVV), 314-334 (VVAI…SLIL), 336-356 (WINI…FSYM), 359-379 (VLAG…GITL), 401-421 (TAAF…LTAH), 432-452 (WSIL…CFLL), 460-480 (IPWV…FAFS), and 499-519 (NTLL…YPLL). The tract at residues 591–674 (HELDSNPLRF…NKNNDTLPLI (84 aa)) is disordered. Positions 601-618 (DDDEEDDDDEDLDFDSDL) are enriched in acidic residues. Over residues 627 to 657 (DSIHQSDNNNNDNGNNNNNNNNIIINNNSQH) the composition is skewed to low complexity. Residues 662 to 674 (GSNNKNNDTLPLI) show a composition bias toward polar residues.

This sequence belongs to the monovalent cation:proton antiporter 1 (CPA1) transporter (TC 2.A.36) family.

The protein localises to the membrane. Its activity is regulated as follows. LY294002, an inhibitor of the catalytic subunit of PI3-kinase, blocks NHE1-dependent (but not NHE1-independent) increase in intracellular pH in response to cAMP. Functionally, regulation of intracellular pH homeostasis in response to cAMP, which is essential for chemotaxis. Necessary for F-actin localization and the kinetics of actin polymerization during chemotaxis and cell polarity but not for directional sensing. The protein is Sodium/hydrogen exchanger 1 (nhe1) of Dictyostelium discoideum (Social amoeba).